The following is a 76-amino-acid chain: Alpha/kappa-conotoxin-like fe14.2 (76 aa).

The N-terminal stretch at 1–24 (MPSVRSVTCCCLLWMMLSVQLVTP) is a signal peptide. The propeptide occupies 25 to 39 (GSPGTAQLSGQRTAR). 2 disulfide bridges follow: C46–C61 and C50–C63. Position 64 is an arginine amide (R64). A propeptide spanning residues 65–76 (GKRDVVSSSMAV) is cleaved from the precursor.

This sequence belongs to the conotoxin J superfamily. Expressed by the venom duct.

It localises to the secreted. Highly inhibits both nicotinic acetylcholine receptors (neuronal (alpha-3/beta-4) and muscular (alpha-1/beta-1/epsilon/delta) subtypes) and the voltage-gated potassium channel Kv1.6/KCNA6 subtype. The sequence is that of Alpha/kappa-conotoxin-like fe14.2 from Conus ferrugineus (Cone snail).